An 856-amino-acid chain; its full sequence is Facilitated trehalose transporter Tret1 (856 aa).

Disordered stretches follow at residues 1–29 (MSGR…LKEK) and 62–202 (DPFL…KATS). Topologically, residues 1–389 (MSGRDNRGAG…LEVYRPTTNP (389 aa)) are cytoplasmic. The segment covering 69-80 (VSPQRHPQTVRT) has biased composition (polar residues). Residues 133–142 (EIREHRDRQQ) show a composition bias toward basic and acidic residues. The span at 170-180 (GNSNTNSNKAA) shows a compositional bias: polar residues. Residues Ser247, Ser248, Ser249, Ser319, and Ser321 each carry the phosphoserine modification. The tract at residues 326–345 (LTSRQHFQQQRSISTDSRKS) is disordered. A compositionally biased stretch (polar residues) spans 329 to 340 (RQHFQQQRSIST). The helical transmembrane segment at 390 to 410 (IFIWTQVIAALSVSLGSLVVG) threads the bilayer. At 411-439 (FVSAYTSPALVSMSDPNITSFTVTKDAGS) the chain is on the extracellular side. Asn427 carries an N-linked (GlcNAc...) asparagine glycan. Residues 440–460 (WVGGIMPLAGLVGGVAGGPLI) traverse the membrane as a helical segment. The Cytoplasmic portion of the chain corresponds to 461–472 (EYMGRRNTILAT). The helical transmembrane segment at 473–493 (AVPFIVSSLLIACAVNVAMVL) threads the bilayer. Residues 494-496 (CGR) are Extracellular-facing. The chain crosses the membrane as a helical span at residues 497 to 517 (FLAGFCVGIASLSLPVYLGET). The Cytoplasmic portion of the chain corresponds to 518-527 (VQPEVRGTLG). The helical transmembrane segment at 528-548 (LLPTAFGNIGILVCFVAGSFM) threads the bilayer. The N-linked (GlcNAc...) asparagine glycan is linked to Asn549. The Extracellular portion of the chain corresponds to 549 to 551 (NWS). Residues 552–572 (MLAFLGAALPVPFLILMFLIP) traverse the membrane as a helical segment. Residues 573–635 (ETPRWYVSRG…ELLKRNNLKP (63 aa)) are Cytoplasmic-facing. A helical membrane pass occupies residues 636–656 (LSISLGLMFFQQFSGINAVIF). Topologically, residues 657 to 672 (YTVQIFKDAGSTIDGN) are extracellular. A helical membrane pass occupies residues 673-693 (VCTIIVGVVNFVATFIGILLI). Residues 694-699 (DRAGRK) lie on the Cytoplasmic side of the membrane. Residues 700–720 (ILLYASDIAMVLTLFVLGGFF) traverse the membrane as a helical segment. Topologically, residues 721–739 (YCKAHGPDVSHLGWLPLTC) are extracellular. Residues 740–760 (FVVYILGFSVGFGPIPWLMMG) traverse the membrane as a helical segment. Topologically, residues 761 to 766 (EILPAK) are cytoplasmic. A helical transmembrane segment spans residues 767–787 (IRGAAASVATSFNWTCTFVVT). At 788 to 800 (KTFQDLVGSLGAH) the chain is on the extracellular side. The chain crosses the membrane as a helical span at residues 801–821 (GAFWLFGAICFVGLFFVILYV). Residues 822-856 (PETQGKTLEDIERKMMGRVRRMSSVANIKPLSFNM) lie on the Cytoplasmic side of the membrane. 2 positions are modified to phosphoserine: Ser844 and Ser845.

Belongs to the major facilitator superfamily. Sugar transporter (TC 2.A.1.1) family. Trehalose transporter subfamily.

It localises to the cell membrane. Functionally, low-capacity facilitative transporter for trehalose. Does not transport maltose, sucrose or lactose. Mediates the bidirectional transfer of trehalose. Responsible for the transport of trehalose synthesized in the fat body and the incorporation of trehalose into other tissues that require a carbon source, thereby regulating trehalose levels in the hemolymph. The protein is Facilitated trehalose transporter Tret1 of Drosophila yakuba (Fruit fly).